The chain runs to 425 residues: Nucleoporin nup45 (425 aa).

The segment covering 1–10 (MFGLNKTPSF) has biased composition (polar residues). The interval 1-207 (MFGLNKTPSF…GFGLSNNTQT (207 aa)) is disordered. The segment covering 11–27 (GSTGTQNQNTGTSAGTG) has biased composition (low complexity). Over residues 28–45 (LFSSNTFGNNTQANTPAS) the composition is skewed to polar residues. The segment covering 47–56 (GFGGVTGGAF) has biased composition (gly residues). Over residues 72 to 89 (PNATSTTPGLNLFGQNPQ) the composition is skewed to polar residues. Composition is skewed to low complexity over residues 112–126 (NQNQ…AAPT) and 135–150 (QNQT…ANTS). Polar residues predominate over residues 167 to 207 (NRPNTSTFGQFSTQPASAGLFGQSTQPSGSTGFGLSNNTQT). Phosphoserine occurs at positions 289 and 290.

The protein localises to the cytoplasm. It is found in the nucleus. It localises to the nuclear pore complex. In terms of biological role, functions as a component of the nuclear pore complex (NPC). NPC components, collectively referred to as nucleoporins (NUPs), can play the role of both NPC structural components and of docking or interaction partners for transiently associated nuclear transport factors. Active directional transport is assured by both, a Phe-Gly (FG) repeat affinity gradient for these transport factors across the NPC and a transport cofactor concentration gradient across the nuclear envelope. This is Nucleoporin nup45 (nup45) from Schizosaccharomyces pombe (strain 972 / ATCC 24843) (Fission yeast).